The chain runs to 665 residues: Methionine--tRNA ligase (665 aa).

Positions 12–22 (YYPSGKLHIGS) match the 'HIGH' region motif. The short motif at 308–312 (KMSKS) is the 'KMSKS' region element. Position 311 (Lys-311) interacts with ATP. The tRNA-binding domain maps to 562–665 (TFDAVEIRVA…SSVPNGSIIG (104 aa)).

The protein belongs to the class-I aminoacyl-tRNA synthetase family. MetG type 2B subfamily. In terms of assembly, homodimer.

Its subcellular location is the cytoplasm. The catalysed reaction is tRNA(Met) + L-methionine + ATP = L-methionyl-tRNA(Met) + AMP + diphosphate. In terms of biological role, is required not only for elongation of protein synthesis but also for the initiation of all mRNA translation through initiator tRNA(fMet) aminoacylation. The sequence is that of Methionine--tRNA ligase (metG) from Streptococcus pyogenes serotype M3 (strain SSI-1).